The following is a 231-amino-acid chain: Caspase-like protein (231 aa).

Belongs to the peptidase C14A family.

The chain is Caspase-like protein from Trichoplusia ni ascovirus 2c (TnAV-2c).